A 461-amino-acid chain; its full sequence is tRNA modification GTPase MnmE (461 aa).

(6S)-5-formyl-5,6,7,8-tetrahydrofolate-binding residues include arginine 23, glutamate 84, and arginine 123. In terms of domain architecture, TrmE-type G spans 216–383 (GARAALIGRP…LGATVARLLL (168 aa)). Position 226 (asparagine 226) interacts with K(+). Residues 226 to 231 (NAGKSS), 245 to 251 (TPIPGTT), and 270 to 273 (DTAG) each bind GTP. Serine 230 provides a ligand contact to Mg(2+). Positions 245, 247, and 250 each coordinate K(+). Position 251 (threonine 251) interacts with Mg(2+). Position 461 (lysine 461) interacts with (6S)-5-formyl-5,6,7,8-tetrahydrofolate.

It belongs to the TRAFAC class TrmE-Era-EngA-EngB-Septin-like GTPase superfamily. TrmE GTPase family. In terms of assembly, homodimer. Heterotetramer of two MnmE and two MnmG subunits. K(+) serves as cofactor.

Its subcellular location is the cytoplasm. Its function is as follows. Exhibits a very high intrinsic GTPase hydrolysis rate. Involved in the addition of a carboxymethylaminomethyl (cmnm) group at the wobble position (U34) of certain tRNAs, forming tRNA-cmnm(5)s(2)U34. In Roseiflexus sp. (strain RS-1), this protein is tRNA modification GTPase MnmE.